A 302-amino-acid polypeptide reads, in one-letter code: 33 kDa chaperonin (302 aa).

2 disulfide bridges follow: Cys-247–Cys-249 and Cys-280–Cys-283.

This sequence belongs to the HSP33 family. Under oxidizing conditions two disulfide bonds are formed involving the reactive cysteines. Under reducing conditions zinc is bound to the reactive cysteines and the protein is inactive.

The protein resides in the cytoplasm. Functionally, redox regulated molecular chaperone. Protects both thermally unfolding and oxidatively damaged proteins from irreversible aggregation. Plays an important role in the bacterial defense system toward oxidative stress. This Prochlorococcus marinus (strain MIT 9301) protein is 33 kDa chaperonin.